An 88-amino-acid polypeptide reads, in one-letter code: ATP synthase subunit c (88 aa).

A run of 2 helical transmembrane segments spans residues 10–30 (ILAASAIGAGLAMIAGLGPGI) and 68–88 (GIYSLVIALILLFANPLIRLL).

It belongs to the ATPase C chain family. As to quaternary structure, F-type ATPases have 2 components, F(1) - the catalytic core - and F(0) - the membrane proton channel. F(1) has five subunits: alpha(3), beta(3), gamma(1), delta(1), epsilon(1). F(0) has three main subunits: a(1), b(2) and c(10-14). The alpha and beta chains form an alternating ring which encloses part of the gamma chain. F(1) is attached to F(0) by a central stalk formed by the gamma and epsilon chains, while a peripheral stalk is formed by the delta and b chains.

The protein resides in the cell membrane. Functionally, f(1)F(0) ATP synthase produces ATP from ADP in the presence of a proton or sodium gradient. F-type ATPases consist of two structural domains, F(1) containing the extramembraneous catalytic core and F(0) containing the membrane proton channel, linked together by a central stalk and a peripheral stalk. During catalysis, ATP synthesis in the catalytic domain of F(1) is coupled via a rotary mechanism of the central stalk subunits to proton translocation. Its function is as follows. Key component of the F(0) channel; it plays a direct role in translocation across the membrane. A homomeric c-ring of between 10-14 subunits forms the central stalk rotor element with the F(1) delta and epsilon subunits. The protein is ATP synthase subunit c of Alkaliphilus oremlandii (strain OhILAs) (Clostridium oremlandii (strain OhILAs)).